The chain runs to 494 residues: Ketol-acid reductoisomerase (NADP(+)) (494 aa).

Residues 14–208 (LDQIGRCRFM…GGDRAGVLES (195 aa)) enclose the KARI N-terminal Rossmann domain. Residues 45–48 (CGAQ), Arg68, Arg76, Ser78, and 108–110 (DKQ) each bind NADP(+). The active site involves His132. Gly158 provides a ligand contact to NADP(+). KARI C-terminal knotted domains lie at 209-344 (SFVA…NAPE) and 345-487 (YNGK…MTDM). 4 residues coordinate Mg(2+): Asp217, Glu221, Glu389, and Glu393. Ser414 contributes to the substrate binding site.

This sequence belongs to the ketol-acid reductoisomerase family. Mg(2+) is required as a cofactor.

It carries out the reaction (2R)-2,3-dihydroxy-3-methylbutanoate + NADP(+) = (2S)-2-acetolactate + NADPH + H(+). It catalyses the reaction (2R,3R)-2,3-dihydroxy-3-methylpentanoate + NADP(+) = (S)-2-ethyl-2-hydroxy-3-oxobutanoate + NADPH + H(+). The protein operates within amino-acid biosynthesis; L-isoleucine biosynthesis; L-isoleucine from 2-oxobutanoate: step 2/4. It participates in amino-acid biosynthesis; L-valine biosynthesis; L-valine from pyruvate: step 2/4. Its function is as follows. Involved in the biosynthesis of branched-chain amino acids (BCAA). Catalyzes an alkyl-migration followed by a ketol-acid reduction of (S)-2-acetolactate (S2AL) to yield (R)-2,3-dihydroxy-isovalerate. In the isomerase reaction, S2AL is rearranged via a Mg-dependent methyl migration to produce 3-hydroxy-3-methyl-2-ketobutyrate (HMKB). In the reductase reaction, this 2-ketoacid undergoes a metal-dependent reduction by NADPH to yield (R)-2,3-dihydroxy-isovalerate. This is Ketol-acid reductoisomerase (NADP(+)) from Pseudoalteromonas atlantica (strain T6c / ATCC BAA-1087).